A 237-amino-acid chain; its full sequence is Ribonuclease PH (237 aa).

Residues R86 and 124-126 contribute to the phosphate site; that span reads GTR.

This sequence belongs to the RNase PH family. As to quaternary structure, homohexameric ring arranged as a trimer of dimers.

It catalyses the reaction tRNA(n+1) + phosphate = tRNA(n) + a ribonucleoside 5'-diphosphate. In terms of biological role, phosphorolytic 3'-5' exoribonuclease that plays an important role in tRNA 3'-end maturation. Removes nucleotide residues following the 3'-CCA terminus of tRNAs; can also add nucleotides to the ends of RNA molecules by using nucleoside diphosphates as substrates, but this may not be physiologically important. Probably plays a role in initiation of 16S rRNA degradation (leading to ribosome degradation) during starvation. This is Ribonuclease PH from Shewanella woodyi (strain ATCC 51908 / MS32).